The following is a 404-amino-acid chain: Indole-3-acetate O-methyltransferase 1 (404 aa).

S-adenosyl-L-methionine contacts are provided by residues 82–83 (GC), N88, D120, 169–171 (TFY), and 186–188 (TFS). N208, V212, R294, D295, F297, and N298 together coordinate Mg(2+).

This sequence belongs to the methyltransferase superfamily. SABATH family. In terms of assembly, homodimer. It depends on Mg(2+) as a cofactor. In terms of tissue distribution, expressed in roots and panicles.

It catalyses the reaction (indol-3-yl)acetate + S-adenosyl-L-methionine = methyl (indol-3-yl)acetate + S-adenosyl-L-homocysteine. Its function is as follows. Catalyzes the methylation of the free carboxyl end of the plant hormone indole-3-acetic acid (IAA). Converts IAA to IAA methyl ester (MeIAA). Regulates IAA activities by IAA methylation. Methylation of IAA plays an important role in regulating plant development and auxin homeostasis. MeIAA seems to be an inactive form of IAA. In Oryza sativa subsp. japonica (Rice), this protein is Indole-3-acetate O-methyltransferase 1 (IAMT1).